The primary structure comprises 62 residues: Large ribosomal subunit protein eL37 (62 aa).

The Zn(2+) site is built by Cys20, Cys23, Cys35, and Cys38. The segment at 20 to 38 (CRRCGRRSYNVAKGYCAAC) adopts a C4-type zinc-finger fold.

This sequence belongs to the eukaryotic ribosomal protein eL37 family. Zn(2+) serves as cofactor.

In terms of biological role, binds to the 23S rRNA. This is Large ribosomal subunit protein eL37 (rpl37e) from Aeropyrum pernix (strain ATCC 700893 / DSM 11879 / JCM 9820 / NBRC 100138 / K1).